The primary structure comprises 630 residues: Probable potassium transport system protein Kup 1 (630 aa).

Helical transmembrane passes span 15 to 35 (FAAL…TSPL), 59 to 79 (LSLI…TFIM), 109 to 129 (WIMI…MVTP), 145 to 165 (PALK…LFFV), 173 to 193 (VGAF…LLGV), 223 to 243 (LVAM…YADM), 255 to 275 (WFAF…ALIL), 297 to 317 (LVGL…SGAF), 345 to 365 (IYLP…VLGF), 374 to 394 (AYGI…TVVV), 405 to 425 (AGLL…ANIL), and 427 to 447 (IPDG…LMTT).

The protein belongs to the HAK/KUP transporter (TC 2.A.72) family.

Its subcellular location is the cell inner membrane. It catalyses the reaction K(+)(in) + H(+)(in) = K(+)(out) + H(+)(out). Functionally, transport of potassium into the cell. Likely operates as a K(+):H(+) symporter. The polypeptide is Probable potassium transport system protein Kup 1 (Dechloromonas aromatica (strain RCB)).